The following is a 295-amino-acid chain: Protoheme IX farnesyltransferase (295 aa).

The next 9 helical transmembrane spans lie at 27-47 (LVVF…HPFL), 48-68 (ALIS…INMW), 94-114 (SALE…AIAV), 117-137 (ISAA…TIWL), 144-164 (NIVI…AVVT), 171-191 (SFIL…ALSL), 216-236 (KHIL…ALFL), 241-261 (FYLS…ISVI), and 272-292 (MFSY…FCSI).

Belongs to the UbiA prenyltransferase family. Protoheme IX farnesyltransferase subfamily.

The protein localises to the cell membrane. It catalyses the reaction heme b + (2E,6E)-farnesyl diphosphate + H2O = Fe(II)-heme o + diphosphate. The protein operates within porphyrin-containing compound metabolism; heme O biosynthesis; heme O from protoheme: step 1/1. In terms of biological role, converts heme B (protoheme IX) to heme O by substitution of the vinyl group on carbon 2 of heme B porphyrin ring with a hydroxyethyl farnesyl side group. The chain is Protoheme IX farnesyltransferase from Wolbachia pipientis subsp. Culex pipiens (strain wPip).